A 441-amino-acid polypeptide reads, in one-letter code: Protein eva-1 homolog C (441 aa).

A disordered region spans residues 1–23; the sequence is MLLPGPARQPPTPQPVQHPGLRR. The N-terminal stretch at 1–48 is a signal peptide; it reads MLLPGPARQPPTPQPVQHPGLRRQVEPPGQLLRLFYCTVLVCSKEISA. A compositionally biased stretch (pro residues) spans 7–16; the sequence is ARQPPTPQPV. Over 49-322 the chain is Extracellular; the sequence is LTDFSGYLTK…AYIRAHPERA (274 aa). Residue Asn62 is glycosylated (N-linked (GlcNAc...) asparagine). The SUEL-type lectin 1 domain maps to 67–159; sequence ACDGDYLNLQ…KYLLVSFKCQ (93 aa). N-linked (GlcNAc...) asparagine glycosylation is present at Asn165. The SUEL-type lectin 2 domain maps to 168–260; sequence VCEDQELKLH…KYLTVTYACV (93 aa). A helical transmembrane segment spans residues 323–343; the sequence is ALLFVSSVCIGLALTLCALVI. The Cytoplasmic segment spans residues 344–441; the sequence is RESCAKDFRD…SLPRNMGQFY (98 aa). Residues 362-391 form a disordered region; it reads VPGSDKVEEDSEDEEEEEDSSESDFPGELS. A compositionally biased stretch (acidic residues) spans 368 to 383; that stretch reads VEEDSEDEEEEEDSSE.

It belongs to the EVA1 family.

The protein localises to the cell membrane. Binds heparin. This is Protein eva-1 homolog C (EVA1C) from Pan troglodytes (Chimpanzee).